Reading from the N-terminus, the 196-residue chain is dTDP-4-dehydro-6-deoxyglucose 3-epimerase (196 aa).

Substrate is bound by residues Arg21, Glu26, 45–47 (QVN), and Arg57. The Proton acceptor role is filled by His60. Positions 70 and 117 each coordinate substrate. Residue Tyr130 is the Proton donor of the active site. The substrate site is built by Glu141 and Arg166.

This sequence belongs to the dTDP-4-dehydrorhamnose 3,5-epimerase family. In terms of assembly, homodimer.

It catalyses the reaction dTDP-4-dehydro-6-deoxy-alpha-D-glucose = dTDP-4-dehydro-6-deoxy-alpha-D-allose. It participates in antibiotic biosynthesis. Involved in the biosynthesis of dTDP-6-deoxy-D-allose, an intermediate in the biosynthesis of mycinose, which is one of the two unusual sugars attached to the 16-membered macrolactone ring of the aglycone antibiotic dihydrochalcomycin (GERI-155). Catalyzes the conversion of dTDP-4-oxo-6-deoxyglucose to dTDP-4-oxo-6-deoxyallose, via a C-3 epimerization. The protein is dTDP-4-dehydro-6-deoxyglucose 3-epimerase of Streptomyces sp.